The sequence spans 187 residues: Ribosome-recycling factor (187 aa).

It belongs to the RRF family.

The protein resides in the cytoplasm. Its function is as follows. Responsible for the release of ribosomes from messenger RNA at the termination of protein biosynthesis. May increase the efficiency of translation by recycling ribosomes from one round of translation to another. The chain is Ribosome-recycling factor from Rhodopseudomonas palustris (strain BisB18).